We begin with the raw amino-acid sequence, 294 residues long: Acetyl-coenzyme A carboxylase carboxyl transferase subunit beta (294 aa).

Residues 25 to 294 (VWTKCTSCEQ…PLVVPVDGSH (270 aa)) enclose the CoA carboxyltransferase N-terminal domain. 4 residues coordinate Zn(2+): cysteine 29, cysteine 32, cysteine 48, and cysteine 51. Residues 29-51 (CTSCEQVLYSAELERNLEVCPKC) form a C4-type zinc finger.

It belongs to the AccD/PCCB family. In terms of assembly, acetyl-CoA carboxylase is a heterohexamer composed of biotin carboxyl carrier protein (AccB), biotin carboxylase (AccC) and two subunits each of ACCase subunit alpha (AccA) and ACCase subunit beta (AccD). Requires Zn(2+) as cofactor.

The protein resides in the cytoplasm. It catalyses the reaction N(6)-carboxybiotinyl-L-lysyl-[protein] + acetyl-CoA = N(6)-biotinyl-L-lysyl-[protein] + malonyl-CoA. It participates in lipid metabolism; malonyl-CoA biosynthesis; malonyl-CoA from acetyl-CoA: step 1/1. Component of the acetyl coenzyme A carboxylase (ACC) complex. Biotin carboxylase (BC) catalyzes the carboxylation of biotin on its carrier protein (BCCP) and then the CO(2) group is transferred by the transcarboxylase to acetyl-CoA to form malonyl-CoA. The protein is Acetyl-coenzyme A carboxylase carboxyl transferase subunit beta of Aliivibrio fischeri (strain ATCC 700601 / ES114) (Vibrio fischeri).